The following is a 361-amino-acid chain: MTQIFNFSAGPAMLPVEVLRRAEQELCNWNGLGTSVMEISHRSKEFMQVAAESEQDLRDLLKIPSNYKVLFCHGGARAQFAAVPLNLLGERSTADYIDGGYWAHSAINEAEKYCTPNVIDVKTRIDDLRGIKPMREWKLSDDAAFVHYCPNETIDGIAIEEEPDFGDKIVVADYSSSILSRRIDVSRYGVIYAGAQKNIGPAGLTLVIVREDLLGKARRELPSILDYQVLADNDSMFNTPPTFAWYLSGMVFKWLKEHGGLAEMEKRNQEKADLLYSAIDGNDFYRNDVALANRSRMNVPFLLADSALDKVFLEESVAAGLHALKGHRVVGGMRASIYNAMPLEGVKALTEFMADFARRHG.

L-glutamate is bound at residue Arg42. Residues 76–77 (AR), Trp102, Thr153, Asp173, and Gln196 contribute to the pyridoxal 5'-phosphate site. Lys197 carries the post-translational modification N6-(pyridoxal phosphate)lysine. A pyridoxal 5'-phosphate-binding site is contributed by 238–239 (NT).

This sequence belongs to the class-V pyridoxal-phosphate-dependent aminotransferase family. SerC subfamily. In terms of assembly, homodimer. Pyridoxal 5'-phosphate is required as a cofactor.

It is found in the cytoplasm. The catalysed reaction is O-phospho-L-serine + 2-oxoglutarate = 3-phosphooxypyruvate + L-glutamate. It carries out the reaction 4-(phosphooxy)-L-threonine + 2-oxoglutarate = (R)-3-hydroxy-2-oxo-4-phosphooxybutanoate + L-glutamate. Its pathway is amino-acid biosynthesis; L-serine biosynthesis; L-serine from 3-phospho-D-glycerate: step 2/3. It functions in the pathway cofactor biosynthesis; pyridoxine 5'-phosphate biosynthesis; pyridoxine 5'-phosphate from D-erythrose 4-phosphate: step 3/5. Its function is as follows. Catalyzes the reversible conversion of 3-phosphohydroxypyruvate to phosphoserine and of 3-hydroxy-2-oxo-4-phosphonooxybutanoate to phosphohydroxythreonine. The polypeptide is Phosphoserine aminotransferase (Pectobacterium atrosepticum (strain SCRI 1043 / ATCC BAA-672) (Erwinia carotovora subsp. atroseptica)).